A 122-amino-acid chain; its full sequence is Large ribosomal subunit protein uL14 (122 aa).

Belongs to the universal ribosomal protein uL14 family. Part of the 50S ribosomal subunit. Forms a cluster with proteins L3 and L19. In the 70S ribosome, L14 and L19 interact and together make contacts with the 16S rRNA in bridges B5 and B8.

Functionally, binds to 23S rRNA. Forms part of two intersubunit bridges in the 70S ribosome. The polypeptide is Large ribosomal subunit protein uL14 (Pelobacter propionicus (strain DSM 2379 / NBRC 103807 / OttBd1)).